The sequence spans 229 residues: Cytochrome b6-f complex iron-sulfur subunit, chloroplastic (229 aa).

The N-terminal 50 residues, 1–50 (MASSSLSPATQLGSSRSALMAMSSGLFVKPTKMNHQMVRKEKIGLRISCQ), are a transit peptide targeting the chloroplast. A helical membrane pass occupies residues 68 to 90 (LNLLLLGALSLPTGYMLVPYATF). The Rieske domain occupies 115 to 211 (AAEWLKTHGP…ADIDEAGKVL (97 aa)). Residues Cys157, His159, Cys175, and His178 each coordinate [2Fe-2S] cluster. Cys162 and Cys177 are disulfide-bonded. At Ser196 the chain carries Phosphoserine.

It belongs to the Rieske iron-sulfur protein family. The 4 large subunits of the cytochrome b6-f complex are cytochrome b6, subunit IV (17 kDa polypeptide, petD), cytochrome f and the Rieske protein, while the 4 small subunits are petG, petL, petM and petN. The complex functions as a dimer. Interacts with PGRL1A. Component of a mitochondrial large protein complex that contains, at least, MIC60, DGS1, TOM40, TOM20 proteins, and petC/RISP. [2Fe-2S] cluster is required as a cofactor. As to expression, confined to photosynthetic tissues, with highest levels in flowers. In leaves, mostly localized in mesophyll cells. In stems, confined to the peripheral ring of chlorenchyma and adjoining groups of cells associated with the vascular bundles. In siliques, present in green wall of the fruit and in peduncle but not in the translucide white septum of the seeds.

The protein resides in the plastid. The protein localises to the chloroplast thylakoid membrane. Its subcellular location is the mitochondrion inner membrane. It carries out the reaction 2 oxidized [plastocyanin] + a plastoquinol + 2 H(+)(in) = 2 reduced [plastocyanin] + a plastoquinone + 4 H(+)(out). Essential protein for photoautotrophism. Confers resistance to photo-oxidative damages by contributing to the thermal dissipation of light energy and to lumenal acidification (increase of pH gradient). Component of the cytochrome b6-f complex, which mediates electron transfer between photosystem II (PSII) and photosystem I (PSI), cyclic electron flow around PSI, and state transitions. This chain is Cytochrome b6-f complex iron-sulfur subunit, chloroplastic, found in Arabidopsis thaliana (Mouse-ear cress).